We begin with the raw amino-acid sequence, 285 residues long: Casein kinase II subunit beta-2 (285 aa).

A disordered region spans residues 226 to 285 (FKDAEDEAELDDDDEEEEEEEEEEEELAAMDEAEGAQQQHAAAAAGTATGGVAAGGEGVH). Over residues 229–259 (AEDEAELDDDDEEEEEEEEEEEELAAMDEAE) the composition is skewed to acidic residues. Low complexity predominate over residues 260 to 272 (GAQQQHAAAAAGT). The segment covering 273–285 (ATGGVAAGGEGVH) has biased composition (gly residues).

The protein belongs to the casein kinase 2 subunit beta family. As to quaternary structure, tetramer composed of two alpha chains, one beta chain and one beta' chain. In terms of processing, phosphorylated by alpha subunit.

Its function is as follows. Regulatory subunit of casein kinase II/CK2. As part of the kinase complex regulates the basal catalytic activity of the alpha subunit a constitutively active serine/threonine-protein kinase that phosphorylates a large number of substrates containing acidic residues C-terminal to the phosphorylated serine or threonine. The sequence is that of Casein kinase II subunit beta-2 (ckb-2) from Neurospora crassa (strain ATCC 24698 / 74-OR23-1A / CBS 708.71 / DSM 1257 / FGSC 987).